The following is a 394-amino-acid chain: Actin-related protein 2 (394 aa).

ATP-binding positions include 160–162 (GDG), 214–218 (RMIKE), and 305–310 (GGSTMY).

The protein belongs to the actin family. ARP2 subfamily. Component of the Arp2/3 complex composed of ACTR2/ARP2, ACTR3/ARP3, ARPC1B/p41-ARC, ARPC2/p34-ARC, ARPC3/p21-ARC, ARPC4/p20-ARC and ARPC5/p16-ARC.

The protein resides in the cytoplasm. It localises to the cytoskeleton. Its subcellular location is the cell projection. The protein localises to the nucleus. Its function is as follows. ATP-binding component of the Arp2/3 complex, a multiprotein complex that mediates actin polymerization upon stimulation by nucleation-promoting factor (NPF). The Arp2/3 complex mediates the formation of branched actin networks in the cytoplasm, providing the force for cell motility. Seems to contact the pointed end of the daughter actin filament. In addition to its role in the cytoplasmic cytoskeleton, the Arp2/3 complex also promotes actin polymerization in the nucleus, thereby regulating gene transcription and repair of damaged DNA. The Arp2/3 complex promotes homologous recombination (HR) repair in response to DNA damage by promoting nuclear actin polymerization, leading to drive motility of double-strand breaks (DSBs). The protein is Actin-related protein 2 (ACTR2) of Gallus gallus (Chicken).